The following is a 185-amino-acid chain: TRAF-interacting protein with FHA domain-containing protein A (185 aa).

T9 carries the post-translational modification Phosphothreonine. The FHA domain occupies 48 to 104 (VKFGRNSNMCQYTFQDKQVSRVQFALQPFKQFNSSVLSFEIKNMSKKTSLMVDNQEL).

Belongs to the TIFA family. In terms of assembly, homooligomer; homooligomerizes following phosphorylation at Thr-9. Interacts with IRAK1, TRAF2 and TRAF6. Interacts with TIFAB; binding to TIFAB inhibits TRAF6 activation, possibly by inducing a conformational change in TIFA. Interacts with ZCCHC11; binding to ZCCHC11 suppresses the TRAF6-dependent activation of NF-kappa-B. Post-translationally, phosphorylated at Thr-9 following detection of ADP-D-glycero-beta-D-manno-heptose (ADP-Heptose) by ALPK1. Phosphorylation at Thr-9 by ALPK1 leads to the formation of an intermolecular binding between the FHA domain and phosphorylated Thr-9, promoting TIFA oligomerization and TIFA-mediated NF-kappa-B activation.

The protein resides in the cytoplasm. In terms of biological role, adapter molecule that plays a key role in the activation of pro-inflammatory NF-kappa-B signaling following detection of bacterial pathogen-associated molecular pattern metabolites (PAMPs). Promotes activation of an innate immune response by inducing the oligomerization and polyubiquitination of TRAF6, which leads to the activation of TAK1 and IKK through a proteasome-independent mechanism. TIFA-dependent innate immune response is triggered by ADP-D-glycero-beta-D-manno-heptose (ADP-Heptose), a potent PAMP present in all Gram-negative and some Gram-positive bacteria: ADP-Heptose is recognized by ALPK1, which phosphorylates TIFA at Thr-9, leading to TIFA homooligomerization and subsequent activation of pro-inflammatory NF-kappa-B signaling. This chain is TRAF-interacting protein with FHA domain-containing protein A, found in Rattus norvegicus (Rat).